Consider the following 95-residue polypeptide: Large ribosomal subunit protein bL25 (95 aa).

Belongs to the bacterial ribosomal protein bL25 family. As to quaternary structure, part of the 50S ribosomal subunit; part of the 5S rRNA/L5/L18/L25 subcomplex. Contacts the 5S rRNA. Binds to the 5S rRNA independently of L5 and L18.

Its function is as follows. This is one of the proteins that binds to the 5S RNA in the ribosome where it forms part of the central protuberance. This chain is Large ribosomal subunit protein bL25, found in Tolumonas auensis (strain DSM 9187 / NBRC 110442 / TA 4).